The primary structure comprises 375 residues: MKKVLVVFGTRPEAIKMAPLVKALQADASLQCGVCVTAQHREMLDQVLRLFDIRPDYDLNVMKPGQDLYELTSNILTGVKSVLESFEPDLVLVHGDTSTTLATTLAAYYKQVPVGHIEAGLRTGNLYSPWPEEVNRKVTGSLAALHFAPTERSRRNLLNEGVPADAVVVTGNTVIDALLSVRQRLQTDTALCRNTASLIPYNIGERRIVLVTGHRRESFGDGFERICSTLTSIARAHPDVDIVYPVHLNPNVREPVGRLLKGIANIHLIEPLDYLPFVYLMDKAHIILTDSGGIQEEAPSLGKPVLVMRDTTERPEAVEAGTVRLVGTSVDALVDSATALLNDDSAYEAMSRAHNPYGDGAASARITRAIQAYFA.

The protein belongs to the UDP-N-acetylglucosamine 2-epimerase family.

It is found in the cytoplasm. It catalyses the reaction UDP-N-acetyl-alpha-D-glucosamine = UDP-N-acetyl-alpha-D-mannosamine. It participates in glycan metabolism; exopolysaccharide EPS I biosynthesis. Its function is as follows. May be involved in synthesis of N-acetyltrideoxygalactose, a component of exopolysaccharide EPS I which functions as a virulence factor. The sequence is that of Probable UDP-N-acetylglucosamine 2-epimerase (epsC) from Ralstonia solanacearum (Pseudomonas solanacearum).